The following is a 333-amino-acid chain: MVEKIDFVVAWVDGNDLVWREKKAQYDGSINTFKEGMNSEKSYREWGTFKYWFRGVEKFAPWVNKIYLVTDQQKPSWLDINSEKLVLVDHTEIICNDYLPVFSANPIESNIHRIPGLSEHFVFFNDDMYLTAPVEPIDFFSEDGLPKYVTALAPITTERYGTGHFQMNDMGIITSHFSKKEILNNGHFFSFKHGIKQLIKTLLYGTTKFICGFWESHLPYPLLKSTMDLVWEKEKAVLETTSASRFRSPSDTNVWLFKYWQIASGQYAIGNPKLGGLFSLDNAGPDFWKLLNSGKYQIMCINDGHNVQDEEQVMTDFVKAMDQLLPDKSSFEI.

This sequence belongs to the stealth family.

Its function is as follows. Part of the type 2Gn receptor polysaccharide (RPS) biosynthesis locus. Essential for cell surface RPS production, and for synthesis of the host-like GalNAc beta 1-3Gal (Gn) motif of the RPS. Probably encodes a 1-3Gal alpha transferase. The sequence is that of Receptor polysaccharide phosphotransferase WefC (wefC) from Streptococcus gordonii.